We begin with the raw amino-acid sequence, 1012 residues long: Formate dehydrogenase subunit alpha (1012 aa).

The segment at residues 1 to 35 (MLIKRRAFLKLTAAGATLSAFGGLGVDLAPAKAQA) is a signal peptide (tat-type signal). One can recognise a 4Fe-4S Mo/W bis-MGD-type domain in the interval 45–103 (AKQTTSVCCYCSVGCGLIVHTDKKTNRAINVEGDPDHPINEGSLCAKGASTWQLAENER). The [4Fe-4S] cluster site is built by cysteine 52, cysteine 55, cysteine 59, and cysteine 89. W-bis(molybdopterin guanine dinucleotide) is bound at residue selenocysteine 193. Position 193 (selenocysteine 193) is a non-standard amino acid, selenocysteine. Residues threonine 393, lysine 395, lysine 398, leucine 428, and asparagine 430 each contribute to the Ca(2+) site. Cysteine 852 and cysteine 879 are disulfide-bonded.

Belongs to the prokaryotic molybdopterin-containing oxidoreductase family. Heterodimer of alpha (FdhA) and beta (FdhB) subunits. [4Fe-4S] cluster is required as a cofactor. Requires W-bis(molybdopterin guanine dinucleotide) as cofactor. In terms of processing, the disulfide bond is likely to be broken in the active form of this enzyme. Predicted to be exported by the Tat system. The position of the signal peptide cleavage has been experimentally proven.

It is found in the periplasm. The enzyme catalyses formate + NAD(+) = CO2 + NADH. Its function is as follows. Alpha chain of the formate dehydrogenase (FDH) catalyze the reversible two-electron oxidation of formate to carbon dioxide. FDH loses activity in the presence of air, but this activity can be restored. The alpha subunit of formate dehydrogenase forms the active site. The polypeptide is Formate dehydrogenase subunit alpha (Megalodesulfovibrio gigas (Desulfovibrio gigas)).